A 1414-amino-acid polypeptide reads, in one-letter code: DNA-directed RNA polymerase subunit beta' (1414 aa).

C70, C72, C85, and C88 together coordinate Zn(2+). D460, D462, and D464 together coordinate Mg(2+). Residues C815, C889, C896, and C899 each coordinate Zn(2+). Residues 1395–1414 are disordered; sequence EAEAQFADISSTPDSDTDAS.

It belongs to the RNA polymerase beta' chain family. In terms of assembly, the RNAP catalytic core consists of 2 alpha, 1 beta, 1 beta' and 1 omega subunit. When a sigma factor is associated with the core the holoenzyme is formed, which can initiate transcription. It depends on Mg(2+) as a cofactor. Zn(2+) serves as cofactor.

It catalyses the reaction RNA(n) + a ribonucleoside 5'-triphosphate = RNA(n+1) + diphosphate. DNA-dependent RNA polymerase catalyzes the transcription of DNA into RNA using the four ribonucleoside triphosphates as substrates. In Herminiimonas arsenicoxydans, this protein is DNA-directed RNA polymerase subunit beta'.